The sequence spans 464 residues: Asparagine--tRNA ligase (464 aa).

It belongs to the class-II aminoacyl-tRNA synthetase family. In terms of assembly, homodimer.

Its subcellular location is the cytoplasm. The catalysed reaction is tRNA(Asn) + L-asparagine + ATP = L-asparaginyl-tRNA(Asn) + AMP + diphosphate + H(+). In Clostridium beijerinckii (strain ATCC 51743 / NCIMB 8052) (Clostridium acetobutylicum), this protein is Asparagine--tRNA ligase.